Reading from the N-terminus, the 155-residue chain is 6,7-dimethyl-8-ribityllumazine synthase (155 aa).

5-amino-6-(D-ribitylamino)uracil contacts are provided by residues F26, 60 to 62, and 84 to 86; these read ALE and AVI. 89–90 is a (2S)-2-hydroxy-3-oxobutyl phosphate binding site; it reads ET. Residue H92 is the Proton donor of the active site. N117 contributes to the 5-amino-6-(D-ribitylamino)uracil binding site. R131 is a binding site for (2S)-2-hydroxy-3-oxobutyl phosphate.

Belongs to the DMRL synthase family.

It carries out the reaction (2S)-2-hydroxy-3-oxobutyl phosphate + 5-amino-6-(D-ribitylamino)uracil = 6,7-dimethyl-8-(1-D-ribityl)lumazine + phosphate + 2 H2O + H(+). The protein operates within cofactor biosynthesis; riboflavin biosynthesis; riboflavin from 2-hydroxy-3-oxobutyl phosphate and 5-amino-6-(D-ribitylamino)uracil: step 1/2. Its function is as follows. Catalyzes the formation of 6,7-dimethyl-8-ribityllumazine by condensation of 5-amino-6-(D-ribitylamino)uracil with 3,4-dihydroxy-2-butanone 4-phosphate. This is the penultimate step in the biosynthesis of riboflavin. In Chromobacterium violaceum (strain ATCC 12472 / DSM 30191 / JCM 1249 / CCUG 213 / NBRC 12614 / NCIMB 9131 / NCTC 9757 / MK), this protein is 6,7-dimethyl-8-ribityllumazine synthase.